Reading from the N-terminus, the 402-residue chain is Lipid-A-disaccharide synthase (402 aa).

This sequence belongs to the LpxB family.

It carries out the reaction a lipid X + a UDP-2-N,3-O-bis[(3R)-3-hydroxyacyl]-alpha-D-glucosamine = a lipid A disaccharide + UDP + H(+). It participates in bacterial outer membrane biogenesis; LPS lipid A biosynthesis. Condensation of UDP-2,3-diacylglucosamine and 2,3-diacylglucosamine-1-phosphate to form lipid A disaccharide, a precursor of lipid A, a phosphorylated glycolipid that anchors the lipopolysaccharide to the outer membrane of the cell. The sequence is that of Lipid-A-disaccharide synthase from Cupriavidus pinatubonensis (strain JMP 134 / LMG 1197) (Cupriavidus necator (strain JMP 134)).